The following is a 41-amino-acid chain: Cuticle protein 32 (41 aa).

4 consecutive repeat copies span residues 17-20, 25-28, 31-34, and 38-41.

In terms of biological role, component of the cuticle of migratory locust which contains more than 100 different structural proteins. The polypeptide is Cuticle protein 32 (Locusta migratoria (Migratory locust)).